Reading from the N-terminus, the 214-residue chain is Type 4 apparatus protein DotN (214 aa).

The Zn(2+) site is built by C52, C55, C84, and C87.

As to quaternary structure, the T4BSS is a complex nanomachine composed of several subcomplexes. This subunit is part of the Type IV Coupling Complex (T4CC), a subcomplex composed of the DotLMNYZ core and the IcmSW-LvgA adapter subunits, linked by the C-terminal tail of DotL. Six DotLMNYZ hetero-pentameric units may assemble into a hexameric nanomachine, forming an inner membrane channel for effectors to pass through. Interacts directly with DotL. Interacts with DotZ.

It localises to the cytoplasm. Component of the Dot/Icm type IVB secretion system (T4BSS), which is used to inject bacterial effector proteins into eukaryotic host cells. Part of a subcomplex which recruits effector proteins and delivers them to the core transmembrane subcomplex. In Legionella pneumophila subsp. pneumophila (strain Philadelphia 1 / ATCC 33152 / DSM 7513), this protein is Type 4 apparatus protein DotN.